Reading from the N-terminus, the 590-residue chain is Type I inositol polyphosphate 5-phosphatase 1 (590 aa).

Positions 47–73 are disordered; the sequence is DYSADSDDDYEDRSQEFDPISSGVTNP. Residues 48 to 57 are compositionally biased toward acidic residues; that stretch reads YSADSDDDYE. At S60 the chain carries Phosphoserine. Catalytic regions lie at residues 445–460 and 523–538; these read ERIIWLGDLNYRINLS and GKRRPAWCDRIIWNGK.

Belongs to the inositol polyphosphate 5-phosphatase family. Expressed ubiquitously.

It carries out the reaction 1D-myo-inositol 1,4,5-trisphosphate + H2O = 1D-myo-inositol 1,4-bisphosphate + phosphate. It catalyses the reaction 1D-myo-inositol 1,3,4,5-tetrakisphosphate + H2O = 1D-myo-inositol 1,3,4-trisphosphate + phosphate. In terms of biological role, has phosphatase activity toward Ins(1,4,5)P3 and Ins(1,3,4,5)P4, but not toward Ins(1,4)P2, Ins(1)P. Seems to be involved in the abscisic acid (ABA) signaling pathway. Could also be able to hydrolyze PtdIns(4,5)P2 and PtdIns(3,4,5)P3. This is Type I inositol polyphosphate 5-phosphatase 1 from Arabidopsis thaliana (Mouse-ear cress).